The chain runs to 368 residues: Probable dual-specificity RNA methyltransferase RlmN (368 aa).

The active-site Proton acceptor is Glu-100. Positions 106–344 (QHYGLSVCVT…CVVRQEHGTD (239 aa)) constitute a Radical SAM core domain. Cys-113 and Cys-349 are disulfide-bonded. Cys-120, Cys-124, and Cys-127 together coordinate [4Fe-4S] cluster. S-adenosyl-L-methionine contacts are provided by residues 172–173 (GE), Ser-204, 227–229 (SLH), and Asn-305. The active-site S-methylcysteine intermediate is the Cys-349.

The protein belongs to the radical SAM superfamily. RlmN family. [4Fe-4S] cluster serves as cofactor.

The protein resides in the cytoplasm. The enzyme catalyses adenosine(2503) in 23S rRNA + 2 reduced [2Fe-2S]-[ferredoxin] + 2 S-adenosyl-L-methionine = 2-methyladenosine(2503) in 23S rRNA + 5'-deoxyadenosine + L-methionine + 2 oxidized [2Fe-2S]-[ferredoxin] + S-adenosyl-L-homocysteine. It catalyses the reaction adenosine(37) in tRNA + 2 reduced [2Fe-2S]-[ferredoxin] + 2 S-adenosyl-L-methionine = 2-methyladenosine(37) in tRNA + 5'-deoxyadenosine + L-methionine + 2 oxidized [2Fe-2S]-[ferredoxin] + S-adenosyl-L-homocysteine. In terms of biological role, specifically methylates position 2 of adenine 2503 in 23S rRNA and position 2 of adenine 37 in tRNAs. The sequence is that of Probable dual-specificity RNA methyltransferase RlmN from Streptococcus agalactiae serotype V (strain ATCC BAA-611 / 2603 V/R).